The sequence spans 397 residues: Probable tRNA sulfurtransferase (397 aa).

In terms of domain architecture, THUMP spans 60-165 (HPVIEKLQEV…KEGTYITAYD (106 aa)). ATP-binding positions include 183 to 184 (ML), 208 to 209 (HF), arginine 265, glycine 287, and glutamine 296.

The protein belongs to the ThiI family.

Its subcellular location is the cytoplasm. It carries out the reaction [ThiI sulfur-carrier protein]-S-sulfanyl-L-cysteine + a uridine in tRNA + 2 reduced [2Fe-2S]-[ferredoxin] + ATP + H(+) = [ThiI sulfur-carrier protein]-L-cysteine + a 4-thiouridine in tRNA + 2 oxidized [2Fe-2S]-[ferredoxin] + AMP + diphosphate. It catalyses the reaction [ThiS sulfur-carrier protein]-C-terminal Gly-Gly-AMP + S-sulfanyl-L-cysteinyl-[cysteine desulfurase] + AH2 = [ThiS sulfur-carrier protein]-C-terminal-Gly-aminoethanethioate + L-cysteinyl-[cysteine desulfurase] + A + AMP + 2 H(+). It participates in cofactor biosynthesis; thiamine diphosphate biosynthesis. Functionally, catalyzes the ATP-dependent transfer of a sulfur to tRNA to produce 4-thiouridine in position 8 of tRNAs, which functions as a near-UV photosensor. Also catalyzes the transfer of sulfur to the sulfur carrier protein ThiS, forming ThiS-thiocarboxylate. This is a step in the synthesis of thiazole, in the thiamine biosynthesis pathway. The sulfur is donated as persulfide by IscS. In Anoxybacillus flavithermus (strain DSM 21510 / WK1), this protein is Probable tRNA sulfurtransferase.